We begin with the raw amino-acid sequence, 704 residues long: Transmembrane protein DDB_G0274347 (704 aa).

The interval 37–145 (VEQRDEVNDE…NNYNNNNTPT (109 aa)) is disordered. The segment covering 43 to 67 (VNDEFQEEEEELEDDDDDEDDEDEI) has biased composition (acidic residues). The segment covering 85–99 (HNDKEKEKKKDKQEE) has biased composition (basic and acidic residues). A compositionally biased stretch (acidic residues) spans 100–113 (YIDSDDDDDDDGDE). The segment covering 114-142 (NYYLNNNNNNNNNINNNNNYNNNNYNNNN) has biased composition (low complexity). Asparagine 166 is a glycosylation site (N-linked (GlcNAc...) asparagine). The helical transmembrane segment at 255–275 (ALISMALLISLVAIIFYLPLP) threads the bilayer. An N-linked (GlcNAc...) asparagine glycan is attached at asparagine 354. 3 helical membrane passes run 370–390 (LKIF…WLFA), 414–434 (TLLV…LYFI), and 513–533 (LVSF…FLIS). The segment covering 550-565 (TTTTTINTTTNTTSNT) has biased composition (low complexity). Residues 550-576 (TTTTTINTTTNTTSNTSQQSNPLSKRL) are disordered. N-linked (GlcNAc...) asparagine glycosylation is found at asparagine 556, asparagine 560, and asparagine 564. The segment covering 566–576 (SQQSNPLSKRL) has biased composition (polar residues). Transmembrane regions (helical) follow at residues 609–629 (FIIV…GVPP) and 638–658 (IFFI…LIII).

The protein resides in the membrane. The sequence is that of Transmembrane protein DDB_G0274347 from Dictyostelium discoideum (Social amoeba).